We begin with the raw amino-acid sequence, 501 residues long: MAVPGSSRRQPSNRGLVSHCTHHHIVVFLLTFFSYSLLHASRKTFSNVKVSISSQWTPSCLNSTTFELRPNELWNSNHLFPNAEEATLFLGTLDTIFLFSYAVGLFVSGIVGDRLNLRWVLSFGMCSSALVVFFFGTLTEWLHFYNKWFYCCLWVVNGLLQSTGWPCVVAVMGNWFGKAGRGFVFGLWSACASVGNILGAFLASCVLKYGYEYAFLVTASVQFAGGVIVFCGLLTSPKEVGLPELGADEEGSVEEDANRPLMGDDDADDDEGNYSIQAADTDSQPKAIGFFQACCLPGVVLYSLAYACLKLVNYSFFFWLPFYLSNNFGWKEAEADQLSIWYDVGGIIGGTIQGLISDVLQKRAPVLAISLLFAVGSLFGYSRSPNSKPINAVIMAITGFFIGGPSNMISSAISADLGRQDLVRGSSEALATVTGIVDGTGSIGAAVGQYLVSLIQENLGWMWVFYFFILMASSTILFISPLIVREIRLLLHERRLRMLAE.

A helical membrane pass occupies residues 20–40 (CTHHHIVVFLLTFFSYSLLHA). An N-linked (GlcNAc...) asparagine glycan is attached at N62. 5 helical membrane passes run 87–107 (TLFL…GLFV), 119–139 (WVLS…GTLT), 153–173 (LWVV…AVMG), 183–203 (FVFG…AFLA), and 214–234 (AFLV…CGLL). An N-linked (GlcNAc...) asparagine glycan is attached at N273. A run of 6 helical transmembrane segments spans residues 298–320 (GVVL…FFWL), 340–360 (IWYD…SDVL), 364–384 (APVL…YSRS), 393–413 (VIMA…SSAI), 435–455 (GIVD…VSLI), and 459–479 (LGWM…ILFI).

The protein belongs to the major facilitator superfamily. Organophosphate:Pi antiporter (OPA) (TC 2.A.1.4) family.

The protein localises to the endoplasmic reticulum membrane. The protein resides in the lysosome membrane. Its function is as follows. Unlike the other SLC37 members, seems to lack glucose-6-phosphate antiporter activity. This chain is Sugar phosphate exchanger 3 (SLC37A3), found in Gallus gallus (Chicken).